The primary structure comprises 135 residues: Cytochrome b5, seed isoform (135 aa).

The region spanning Ser5–Asp81 is the Cytochrome b5 heme-binding domain. Residues His40 and His64 each coordinate heme. The chain crosses the membrane as a helical span at residues Phe107 to Val127.

This sequence belongs to the cytochrome b5 family. Specifically expressed in developing seeds.

It localises to the endoplasmic reticulum membrane. Its subcellular location is the microsome membrane. Its function is as follows. Cytochrome b5 is a membrane bound hemoprotein which function as an electron carrier for several membrane bound oxygenases. May play a key role in the modification by desaturation of fatty acids in the endoplasmic reticulum, which in the developing seed is utilized for membrane synthesis and in the developmentally regulated production of large amounts of storage lipids. The sequence is that of Cytochrome b5, seed isoform from Nicotiana tabacum (Common tobacco).